Reading from the N-terminus, the 391-residue chain is Na(+)/H(+) antiporter NhaA (391 aa).

11 consecutive transmembrane segments (helical) span residues 14 to 34 (GGII…LGAT), 59 to 79 (MLLW…GLEV), 95 to 115 (AFPV…YLAF), 125 to 145 (GWAI…ALLG), 154 to 174 (IFLM…IALF), 180 to 200 (SILS…LNIF), 219 to 239 (VLKS…FIPL), 254 to 274 (VLHP…NAGV), 292 to 312 (IIAG…WLAL), 328 to 348 (IMAV…ISTL), and 357 to 377 (LIVW…FVGY).

Belongs to the NhaA Na(+)/H(+) (TC 2.A.33) antiporter family.

It is found in the cell inner membrane. The enzyme catalyses Na(+)(in) + 2 H(+)(out) = Na(+)(out) + 2 H(+)(in). Functionally, na(+)/H(+) antiporter that extrudes sodium in exchange for external protons. The chain is Na(+)/H(+) antiporter NhaA from Enterobacter sp. (strain 638).